Here is a 616-residue protein sequence, read N- to C-terminus: Telomeric repeat-binding factor 2-interacting protein 1 (616 aa).

One can recognise a BRCT domain in the interval 15–98 (FLDPGGQSMR…QQLDPNDYAI (84 aa)). A Myb-like domain is found at 112–169 (NQGSGRLGYSSEEDAAILKFIEKRQQDAKGNLVWKEMEKRHVTEHSWQSMKDRFLKHL). The tract at residues 174 to 518 (ADKPTKKSPI…CSHIRETPEE (345 aa)) is disordered. The segment covering 232 to 245 (PERASSPPEEPQAA) has biased composition (low complexity). Residues 246-255 (GQPSQASSND) show a composition bias toward polar residues. Composition is skewed to basic and acidic residues over residues 271 to 288 (ENPR…EHSS) and 344 to 358 (RSSR…RDIP). Polar residues-rich tracts occupy residues 363–382 (EQSS…SDSG) and 397–415 (NANS…ASTP). The span at 431–444 (EDSDVMDDSEECEN) shows a compositional bias: acidic residues. Positions 468–480 (REPESQAEHHEET) are enriched in basic and acidic residues. A Nuclear localization signal motif is present at residues 597–613 (SKFGEEEVTRRKSFLAT).

It belongs to the RAP1 family. As to quaternary structure, homodimer. Component of the shelterin complex (telosome). Interacts with terf2; the interaction is direct.

It localises to the nucleus. The protein localises to the chromosome. Its subcellular location is the telomere. Its function is as follows. Acts both as a regulator of telomere function and as a transcription regulator. Involved in the regulation of telomere length and protection as a component of the shelterin complex (telosome). Does not bind DNA directly: recruited to telomeric double-stranded 5'-TTAGGG-3' repeats via its interaction with terf2. Independently of its function in telomeres, also acts as a transcription regulator: recruited to extratelomeric 5'-TTAGGG-3' sites via its association with terf2 or other factors, and regulates gene expression. In Danio rerio (Zebrafish), this protein is Telomeric repeat-binding factor 2-interacting protein 1 (terf2ip).